The primary structure comprises 95 residues: Fatty acid-binding protein, liver (95 aa).

Lys-13 and Lys-18 each carry N6-succinyllysine. Ser-21 is subject to Phosphoserine. Lys-28 bears the N6-succinyllysine mark. Thr-33 bears the Phosphothreonine mark. Ser-38 carries the post-translational modification Phosphoserine. N6-succinyllysine is present on residues Lys-39, Lys-47, and Lys-59. Ser-69 is modified (phosphoserine). Lys-90 is subject to N6-succinyllysine.

This sequence belongs to the calycin superfamily. Fatty-acid binding protein (FABP) family. As to quaternary structure, monomer.

Its subcellular location is the cytoplasm. Functionally, this protein binds free fatty acids and their coenzyme A derivatives, bilirubin, and some other small molecules in the cytoplasm; it may be involved in intracellular lipid transport. In Chaetophractus villosus (South American armadillo), this protein is Fatty acid-binding protein, liver (FABP1).